The sequence spans 173 residues: Crossover junction endodeoxyribonuclease RuvC (173 aa).

Catalysis depends on residues Asp-8, Glu-67, and Asp-139. 3 residues coordinate Mg(2+): Asp-8, Glu-67, and Asp-139.

Belongs to the RuvC family. As to quaternary structure, homodimer which binds Holliday junction (HJ) DNA. The HJ becomes 2-fold symmetrical on binding to RuvC with unstacked arms; it has a different conformation from HJ DNA in complex with RuvA. In the full resolvosome a probable DNA-RuvA(4)-RuvB(12)-RuvC(2) complex forms which resolves the HJ. It depends on Mg(2+) as a cofactor.

It localises to the cytoplasm. The enzyme catalyses Endonucleolytic cleavage at a junction such as a reciprocal single-stranded crossover between two homologous DNA duplexes (Holliday junction).. Its function is as follows. The RuvA-RuvB-RuvC complex processes Holliday junction (HJ) DNA during genetic recombination and DNA repair. Endonuclease that resolves HJ intermediates. Cleaves cruciform DNA by making single-stranded nicks across the HJ at symmetrical positions within the homologous arms, yielding a 5'-phosphate and a 3'-hydroxyl group; requires a central core of homology in the junction. The consensus cleavage sequence is 5'-(A/T)TT(C/G)-3'. Cleavage occurs on the 3'-side of the TT dinucleotide at the point of strand exchange. HJ branch migration catalyzed by RuvA-RuvB allows RuvC to scan DNA until it finds its consensus sequence, where it cleaves and resolves the cruciform DNA. The polypeptide is Crossover junction endodeoxyribonuclease RuvC (Sodalis glossinidius (strain morsitans)).